A 499-amino-acid chain; its full sequence is Protein flp (499 aa).

The next 4 helical transmembrane spans lie at 6-26, 389-409, 433-453, and 471-491; these read LYFLSISIIILVAISIAIYIT, FNIVTVLMTTLILLAFIFSAY, LTLCLCIAIALILYALPYLIL, and LTLTTAFIALFSMLITLLLIL.

It is found in the cell membrane. Its precise function is unknown. Has no penicillin-binding activity and is not involved in methicillin resistance. The sequence is that of Protein flp (flp) from Staphylococcus aureus (strain MRSA252).